We begin with the raw amino-acid sequence, 350 residues long: Biotin synthase (350 aa).

Residues 41 to 268 (NEVQISRLLS…LSRVRLSAGR (228 aa)) form the Radical SAM core domain. Residues Cys56, Cys60, and Cys63 each coordinate [4Fe-4S] cluster. Residues Cys100, Cys131, Cys191, and Arg263 each coordinate [2Fe-2S] cluster.

Belongs to the radical SAM superfamily. Biotin synthase family. As to quaternary structure, homodimer. [4Fe-4S] cluster is required as a cofactor. The cofactor is [2Fe-2S] cluster.

It catalyses the reaction (4R,5S)-dethiobiotin + (sulfur carrier)-SH + 2 reduced [2Fe-2S]-[ferredoxin] + 2 S-adenosyl-L-methionine = (sulfur carrier)-H + biotin + 2 5'-deoxyadenosine + 2 L-methionine + 2 oxidized [2Fe-2S]-[ferredoxin]. It participates in cofactor biosynthesis; biotin biosynthesis; biotin from 7,8-diaminononanoate: step 2/2. Its function is as follows. Catalyzes the conversion of dethiobiotin (DTB) to biotin by the insertion of a sulfur atom into dethiobiotin via a radical-based mechanism. In Shewanella oneidensis (strain ATCC 700550 / JCM 31522 / CIP 106686 / LMG 19005 / NCIMB 14063 / MR-1), this protein is Biotin synthase.